The following is a 198-amino-acid chain: Glycerol-3-phosphate acyltransferase (198 aa).

3 helical membrane-spanning segments follow: residues 5–25 (AVIL…GYLI), 114–134 (VLIM…IAVL), and 154–176 (AFAL…LVAV).

It belongs to the PlsY family. Probably interacts with PlsX.

It localises to the cell membrane. It carries out the reaction an acyl phosphate + sn-glycerol 3-phosphate = a 1-acyl-sn-glycero-3-phosphate + phosphate. It functions in the pathway lipid metabolism; phospholipid metabolism. Functionally, catalyzes the transfer of an acyl group from acyl-phosphate (acyl-PO(4)) to glycerol-3-phosphate (G3P) to form lysophosphatidic acid (LPA). This enzyme utilizes acyl-phosphate as fatty acyl donor, but not acyl-CoA or acyl-ACP. This Desulforudis audaxviator (strain MP104C) protein is Glycerol-3-phosphate acyltransferase.